A 142-amino-acid chain; its full sequence is 2-aminomuconate deaminase (142 aa).

Belongs to the 2-aminomuconate deaminase family. As to quaternary structure, homotetramer.

It catalyses the reaction (2Z,4E)-2-aminomuconate + H2O = (3E)-2-oxohex-3-enedioate + NH4(+). With respect to regulation, slightly inhibited by Pb(2+), Hg(+) and Cu(2+). Involved in the modified meta-cleavage pathway for the 2-aminophenol catabolism. Only active toward 2-aminomuconic acid. The protein is 2-aminomuconate deaminase (amnD) of Pseudomonas sp.